Reading from the N-terminus, the 85-residue chain is uncharacterized protein (85 aa).

The interval 44-85 is disordered; it reads EAHPSEHNGTVPRSLSQEWAKILAEEAEENSEENNDESEEDN. The segment covering 50–60 has biased composition (polar residues); that stretch reads HNGTVPRSLSQ. The segment covering 68 to 85 has biased composition (acidic residues); the sequence is EEAEENSEENNDESEEDN.

This is an uncharacterized protein from Haloarcula hispanica (His1V).